The primary structure comprises 876 residues: Alanine--tRNA ligase (876 aa).

4 residues coordinate Zn(2+): His-565, His-569, Cys-667, and His-671.

This sequence belongs to the class-II aminoacyl-tRNA synthetase family. It depends on Zn(2+) as a cofactor.

It localises to the cytoplasm. The enzyme catalyses tRNA(Ala) + L-alanine + ATP = L-alanyl-tRNA(Ala) + AMP + diphosphate. In terms of biological role, catalyzes the attachment of alanine to tRNA(Ala) in a two-step reaction: alanine is first activated by ATP to form Ala-AMP and then transferred to the acceptor end of tRNA(Ala). Also edits incorrectly charged Ser-tRNA(Ala) and Gly-tRNA(Ala) via its editing domain. The protein is Alanine--tRNA ligase of Desulfosudis oleivorans (strain DSM 6200 / JCM 39069 / Hxd3) (Desulfococcus oleovorans).